The following is a 403-amino-acid chain: Alpha-1-antiproteinase F (403 aa).

Positions 1-22 (SAIPRGLLLLAGLCCLVFGIMA) are cleaved as a signal peptide. Asparagine 55, asparagine 92, asparagine 155, asparagine 222, and asparagine 256 each carry an N-linked (GlcNAc...) asparagine glycan. Positions 358-377 (GATELEITPHSVPQDLFFNK) are RCL.

This sequence belongs to the serpin family.

The protein resides in the secreted. Inhibits elastase, chymotrypsin, cathepsin G, plasmin, and trypsin. The chain is Alpha-1-antiproteinase F from Cavia porcellus (Guinea pig).